A 70-amino-acid polypeptide reads, in one-letter code: MKKGIHPEMRLLTVRCACGAEHKIWTTKEQLKIDVCSNCHPLYKGSGGASLIVDTEGRVQKFKKKFEGKY.

4 residues coordinate Zn(2+): Cys-16, Cys-18, Cys-36, and Cys-39.

It belongs to the bacterial ribosomal protein bL31 family. Type A subfamily. Part of the 50S ribosomal subunit. Requires Zn(2+) as cofactor.

In terms of biological role, binds the 23S rRNA. This Fervidobacterium nodosum (strain ATCC 35602 / DSM 5306 / Rt17-B1) protein is Large ribosomal subunit protein bL31.